A 200-amino-acid polypeptide reads, in one-letter code: Putative HMP/thiamine-binding protein YkoF (200 aa).

Thiamine is bound by residues leucine 17 and threonine 49.

Homodimer in vitro. In vivo, may be a part of an ABC transporter complex which is composed of two ATP-binding proteins (YkoD), two transmembrane proteins (YkoC and YkoE) and a solute-binding protein (YkoF).

In terms of biological role, part of the ABC transporter complex YkoCDEF that could transport hydroxymethylpyrimidine (HMP) and/or thiamine. Could also transport other HMP-containing products. Binds thiamine via its HMP moiety. The polypeptide is Putative HMP/thiamine-binding protein YkoF (ykoF) (Bacillus subtilis (strain 168)).